The sequence spans 57 residues: Large ribosomal subunit protein bL32 (57 aa).

The tract at residues 1-23 is disordered; the sequence is MAVPKKRTSKTRTNRRRAQKKAR.

It belongs to the bacterial ribosomal protein bL32 family.

In Natranaerobius thermophilus (strain ATCC BAA-1301 / DSM 18059 / JW/NM-WN-LF), this protein is Large ribosomal subunit protein bL32.